The following is a 403-amino-acid chain: Phosphoglycerate kinase (403 aa).

Substrate contacts are provided by residues 22–24 (DLN), Arg37, 60–63 (HLGN), Arg119, and Arg152. ATP-binding positions include Lys202, Glu325, and 355 to 358 (GGDT).

The protein belongs to the phosphoglycerate kinase family. As to quaternary structure, monomer.

The protein resides in the cytoplasm. The enzyme catalyses (2R)-3-phosphoglycerate + ATP = (2R)-3-phospho-glyceroyl phosphate + ADP. Its pathway is carbohydrate degradation; glycolysis; pyruvate from D-glyceraldehyde 3-phosphate: step 2/5. This is Phosphoglycerate kinase from Orientia tsutsugamushi (strain Boryong) (Rickettsia tsutsugamushi).